We begin with the raw amino-acid sequence, 68 residues long: Small integral membrane protein 45 (68 aa).

A helical transmembrane segment spans residues 7 to 27 (WFVPVYLVISVLILVGFGACI).

As to expression, highly expressed in brain.

The protein resides in the nucleus. The protein localises to the cytoplasm. Its subcellular location is the membrane. Plays a role in the regulation of neuron maturation. In Homo sapiens (Human), this protein is Small integral membrane protein 45.